The following is an 882-amino-acid chain: HTH-type transcriptional regulator AlkS (882 aa).

Residue 51-58 participates in ATP binding; it reads APPGYGKT. Positions 815–880 constitute an HTH luxR-type domain; it reads ENKADALLTR…QATIEAERQG (66 aa). Residues 839–858 constitute a DNA-binding region (H-T-H motif); it reads NKQIATNMHVTEDAIKWHMR.

Its pathway is hydrocarbon metabolism; alkane degradation. In terms of biological role, this protein activates the expression of alkBFGHJKL operon in the presence of alkanes. The polypeptide is HTH-type transcriptional regulator AlkS (alkS) (Ectopseudomonas oleovorans (Pseudomonas oleovorans)).